Consider the following 932-residue polypeptide: MAPPQRHPQRSEQVLLLTLLGTLWGAAAAQIRYSIPEELEKGSFVGNIVKDLGLEPQELAEHGVRIVSRGRMQLFSLNPRNGSLVTAGRIDREELCAQSPRCLVSFNILVEDKLNLYPVEVEIVDINDNTPRFLKEELEVKILENAAPSSRFPLMEVYDPDVGMNSLQGFKLSGNSHFSVDVQSEAHGPKYPELVLEGTLDREGEAVYRLVLTAMDGGDPVRSSVAQILVTVLDVNDNTPMFTQPVYRVSVPENLPVGTPVLAVTATDQDEGVHGEVTYSFVKITEKISQIFCLNVLTGEISTSANLDYEDSSFYELGVEARDGPGLRDRAKVLITILDVNDNVPEVVVTSGSRTIAESAPPGTVIALFQVFDRDSGLNGLVTCSIPRSLPFELEKSVGNYYRLVTNAALDREEVFLYNITVTATDKGTPPLSTETIISLNVADTNDNPPTFPHSSYSVYVLENNPRGASIFSVNALDPDVDQNAQVSYSLAEDTLQGAPLSSYVSINSDTGILYALRSFDYEQLRDLQLWVTASDSGDPPLSSNVSLSLFVLDQNDNAPEILYPALPTDGSTGVELAPRSAEPGYLVTKVVAVDRDSGQNAWLSYRLLKASEPGLFSVGLHTGEVRTARALLDRDALKQSLVVAVQDHGQPPLSATVTLTVAVADRIPDILADLGSLEPSAKPNDSDLTLYLVVAVAAVSCVFLAFVIVLLALRLQRWHKSRLLQASGGGLASMPGSHFVGVEGVRAFLQTYSHEVSLTADSRKSHLIFPQPNYADTLINQESYEKSEPLLITQDLLETKGEPRQLQQAPPNTDWRFSQAQRPGTSGSQNGDDTGTWPNNQFDTEMLQAMILASASEAADGSSTLGGGAGTMGLSARYGPQFTLQHVPDYRQNVYIPGSNATLTNAAGKRDGKAPAGGNGNKKKSGKKEKK.

The first 29 residues, 1 to 29 (MAPPQRHPQRSEQVLLLTLLGTLWGAAAA), serve as a signal peptide directing secretion. Cadherin domains are found at residues 30–133 (QIRY…TPRF), 134–242 (LKEE…TPMF), 243–347 (TQPV…VPEV), 348–452 (VVTS…PPTF), 453–562 (PHSS…APEI), and 570–682 (DGST…EPSA). At 30 to 692 (QIRYSIPEEL…KPNDSDLTLY (663 aa)) the chain is on the extracellular side. N81 carries an N-linked (GlcNAc...) asparagine glycan. Residues N419 and N545 are each glycosylated (N-linked (GlcNAc...) asparagine). An N-linked (GlcNAc...) asparagine glycan is attached at N685. The helical transmembrane segment at 693-713 (LVVAVAAVSCVFLAFVIVLLA) threads the bilayer. Residues 714–932 (LRLQRWHKSR…KKKSGKKEKK (219 aa)) lie on the Cytoplasmic side of the membrane. 2 disordered regions span residues 804 to 841 (PRQL…WPNN) and 902 to 932 (ATLT…KEKK). Residues 806–841 (QLQQAPPNTDWRFSQAQRPGTSGSQNGDDTGTWPNN) show a composition bias toward polar residues. Residues 922 to 932 (NKKKSGKKEKK) show a composition bias toward basic residues.

It is found in the cell membrane. Its function is as follows. Potential calcium-dependent cell-adhesion protein. May be involved in the establishment and maintenance of specific neuronal connections in the brain. The chain is Protocadherin gamma-A6 (PCDHGA6) from Homo sapiens (Human).